The chain runs to 389 residues: Chalcone synthase (389 aa).

Residue Cys164 is part of the active site.

This sequence belongs to the thiolase-like superfamily. Chalcone/stilbene synthases family.

It carries out the reaction (E)-4-coumaroyl-CoA + 3 malonyl-CoA + 3 H(+) = 2',4,4',6'-tetrahydroxychalcone + 3 CO2 + 4 CoA. Its pathway is secondary metabolite biosynthesis; flavonoid biosynthesis. Its function is as follows. The primary product of this enzyme is 4,2',4',6'-tetrahydroxychalcone (also termed naringenin-chalcone or chalcone) which can under specific conditions spontaneously isomerize into naringenin. In Catharanthus roseus (Madagascar periwinkle), this protein is Chalcone synthase (CHS).